Reading from the N-terminus, the 383-residue chain is Paralemmin-1 (383 aa).

Residue M1 is modified to N-acetylmethionine. A coiled-coil region spans residues 5-102 (ATDTASQQER…KEIDVLEFGE (98 aa)). 3 disordered regions span residues 51 to 163 (RERW…GSTM), 242 to 295 (TLSE…GQEP), and 334 to 375 (ATPR…MKKP). A compositionally biased stretch (basic and acidic residues) spans 69–96 (DMRKQMQEDEQKARGLEESITRLEKEID). Composition is skewed to polar residues over residues 109-124 (KENS…QSAS) and 133-143 (ETLVNAQQTPL). Residues S116, S122, and S124 each carry the phosphoserine modification. A phosphothreonine mark is found at T141, T145, and T153. Phosphoserine occurs at positions 157 and 161. T242 is modified (phosphothreonine). S244 bears the Phosphoserine mark. A compositionally biased stretch (basic and acidic residues) spans 257 to 273 (GLAEDVTRTTPSRREIT). The span at 285-295 (GPPGIQPGQEP) shows a compositional bias: low complexity. The residue at position 345 (S345) is a Phosphoserine. A compositionally biased stretch (polar residues) spans 357–367 (QTGPTTTPSDT). Phosphothreonine is present on residues T361, T362, and T363. Phosphoserine is present on S365. Phosphothreonine is present on T367. S-palmitoyl cysteine attachment occurs at residues C377 and C379. Cysteine methyl ester is present on C380. A lipid anchor (S-farnesyl cysteine) is attached at C380. The propeptide at 381–383 (SVM) is removed in mature form.

This sequence belongs to the paralemmin family. Interacts with dopamine receptor DRD3. Expression is highest in brain, intermediate in adrenal gland and kidney, and much lower or undetectable in other tissues. Isoform 1 is the predominant isoform in most tissues except brain and kidney where isoform 2 predominates.

Its subcellular location is the cell membrane. It localises to the cell projection. The protein resides in the filopodium membrane. The protein localises to the axon. It is found in the dendrite. Its subcellular location is the dendritic spine. It localises to the basolateral cell membrane. The protein resides in the apicolateral cell membrane. Functionally, involved in plasma membrane dynamics and cell process formation. Isoform 1 and isoform 2 are necessary for axonal and dendritic filopodia induction, for dendritic spine maturation and synapse formation in a palmitoylation-dependent manner. The sequence is that of Paralemmin-1 (Palm) from Mus musculus (Mouse).